Here is a 256-residue protein sequence, read N- to C-terminus: Proteasome subunit alpha-type 8 (256 aa).

Belongs to the peptidase T1A family. Component of the outer alpha-ring of the 20S proteasome core which is composed of 28 subunits that are arranged in four stacked rings, resulting in a barrel-shaped structure. The catalytic chamber with the active sites is on the inside of the barrel. Interacts with canonical subunits of the spermatoproteasome, including proteasome activators PSME4 (also called PA200) and PSME3 (also called PA28-gamma). Interacts with proteasome-interacting proteins chaperones, ubiquitin ligases and ubiquitin specific proteases. Interacts with meiotic proteins cyclin dependent kinase CDK1 and the ATPase TRIP13 as well as proteins of the synaptonemal complex SIX6OS1 and SYCE3.

The protein localises to the nucleus. In terms of biological role, component of the spermatoproteasome, a proteasome specifically found in testis that promotes acetylation-dependent degradation of histones, thereby participating actively to the exchange of histones during spermatogenesis. The proteasome is a protein complex that degrades unneeded or damaged proteins by proteolysis, a chemical reaction that breaks peptide bonds. Required for 20S core proteasome assembly, essential for the degradation of meiotic proteins RAD51 and RPA1 at late prophase I and the progression of meiosis I during spermatogenesis. Localizes to the synaptonemal complex, a 'zipper'-like structure that holds homologous chromosome pairs in synapsis during meiotic prophase I. The sequence is that of Proteasome subunit alpha-type 8 (PSMA8) from Homo sapiens (Human).